Reading from the N-terminus, the 389-residue chain is Large envelope protein (389 aa).

Met1 carries the N-acetylmethionine modification. The N-myristoyl glycine; by host moiety is linked to residue Gly2. Residues 2 to 108 are pre-S1; that stretch reads GQNLSVTNPL…PPLRDTHPQA (107 aa). The interval 2–163 is pre-S; that stretch reads GQNLSVTNPL…FLKTGDPALN (162 aa). At 2–170 the chain is on the virion surface; in external conformation side; it reads GQNLSVTNPL…ALNMESISSG (169 aa). The Intravirion; in internal conformation segment spans residues 2 to 242; the sequence is GQNLSVTNPL…PGYRWMCLRR (241 aa). The segment at 78-105 is disordered; the sequence is PAVPPPASTNRQSGRRPTPISPPLRDTH. The segment at 109 to 163 is pre-S2; sequence MQWNSTVFHQALQDPRVRGLYFPAGGSSSGTVSPVPTTASPISSTFLKTGDPALN. The chain crosses the membrane as a helical span at residues 171 to 191; that stretch reads FLGPLLVLQAGFFLLTKILTI. Topologically, residues 192-242 are intravirion; in external conformation; the sequence is PQSLDSWWTSLNFLGGAPVCPGQNSQSLTSNHSPTSCPPICPGYRWMCLRR. The helical transmembrane segment at 243–263 threads the bilayer; it reads FIIFLFILLLCLIFLLVLLDY. The Virion surface segment spans residues 264-337; the sequence is RGMLPVCPLL…WASVRFSWLN (74 aa). Residue Asn309 is glycosylated (N-linked (GlcNAc...) asparagine; by host). Residues 338-358 traverse the membrane as a helical segment; sequence LLVPFVQWFAGLSPTVWLSVI. Over 359 to 364 the chain is Intravirion; sequence WMIWYW. Residues 365–387 traverse the membrane as a helical segment; that stretch reads GPSLYNILSPFIPLLPIFFCLWA. Topologically, residues 388 to 389 are virion surface; the sequence is YI.

This sequence belongs to the orthohepadnavirus major surface antigen family. As to quaternary structure, in its internal form (Li-HBsAg), interacts with the capsid protein and with the isoform S. Interacts with host chaperone CANX. Associates with host chaperone CANX through its pre-S2 N glycan; this association may be essential for isoform M proper secretion. In terms of assembly, interacts with isoform L. Interacts with the antigens of satellite virus HDV (HDVAgs); this interaction is required for encapsidation of HDV genomic RNA. In terms of processing, isoform M is N-terminally acetylated by host at a ratio of 90%, and N-glycosylated by host at the pre-S2 region. Post-translationally, myristoylated.

The protein localises to the virion membrane. The large envelope protein exists in two topological conformations, one which is termed 'external' or Le-HBsAg and the other 'internal' or Li-HBsAg. In its external conformation the protein attaches the virus to cell receptors and thereby initiating infection. This interaction determines the species specificity and liver tropism. This attachment induces virion internalization predominantly through caveolin-mediated endocytosis. The large envelope protein also assures fusion between virion membrane and endosomal membrane. In its internal conformation the protein plays a role in virion morphogenesis and mediates the contact with the nucleocapsid like a matrix protein. Its function is as follows. The middle envelope protein plays an important role in the budding of the virion. It is involved in the induction of budding in a nucleocapsid independent way. In this process the majority of envelope proteins bud to form subviral lipoprotein particles of 22 nm of diameter that do not contain a nucleocapsid. This Pongo pygmaeus (Bornean orangutan) protein is Large envelope protein.